A 131-amino-acid chain; its full sequence is Insulin-like 3 (131 aa).

The N-terminal stretch at 1–24 (MDPRLPAWALVLLGPALVFALGPA) is a signal peptide. 3 disulfide bridges follow: C34/C117, C46/C130, and C116/C121. Positions 58 to 104 (PVAAGDGELLQWLERRHLLYGLVANSEPAPGGPGLQPMPQTSHHHRH) are cleaved as a propeptide — c peptide like. Positions 86 to 105 (APGGPGLQPMPQTSHHHRHR) are disordered.

Belongs to the insulin family. Heterodimer of a B chain and an A chain linked by two disulfide bonds. As to expression, highest expression in the Leydig cells of the testis.

The protein localises to the secreted. In terms of biological role, seems to play a role in testicular function. May be a trophic hormone with a role in testicular descent in fetal life. Is a ligand for LGR8 receptor. The protein is Insulin-like 3 (INSL3) of Callithrix jacchus (White-tufted-ear marmoset).